A 159-amino-acid chain; its full sequence is Fimbrial protein MyfA (159 aa).

The N-terminal stretch at 1 to 29 (MNMKKFVKKPLAIAVLMLASGGMVNMVHA) is a signal peptide.

Forms a homomer composed of subunits assembled in a large structure resistant to proteases and chaotropic agents.

Its subcellular location is the fimbrium. Its function is as follows. Major pilus subunit. Expressed only in pathogenic serotypes, it is part of myf, a probable virulence factor. This Yersinia enterocolitica protein is Fimbrial protein MyfA (myfA).